Reading from the N-terminus, the 361-residue chain is Histidinol-phosphate aminotransferase (361 aa).

K220 is modified (N6-(pyridoxal phosphate)lysine).

This sequence belongs to the class-II pyridoxal-phosphate-dependent aminotransferase family. Histidinol-phosphate aminotransferase subfamily. Homodimer. Pyridoxal 5'-phosphate is required as a cofactor.

It carries out the reaction L-histidinol phosphate + 2-oxoglutarate = 3-(imidazol-4-yl)-2-oxopropyl phosphate + L-glutamate. It functions in the pathway amino-acid biosynthesis; L-histidine biosynthesis; L-histidine from 5-phospho-alpha-D-ribose 1-diphosphate: step 7/9. This Syntrophus aciditrophicus (strain SB) protein is Histidinol-phosphate aminotransferase.